The chain runs to 166 residues: Small ribosomal subunit protein uS5 (166 aa).

Residues 11-74 (LEDRVVAINR…DAARKNLIEV (64 aa)) enclose the S5 DRBM domain.

The protein belongs to the universal ribosomal protein uS5 family. Part of the 30S ribosomal subunit. Contacts proteins S4 and S8.

Functionally, with S4 and S12 plays an important role in translational accuracy. Its function is as follows. Located at the back of the 30S subunit body where it stabilizes the conformation of the head with respect to the body. The protein is Small ribosomal subunit protein uS5 of Ligilactobacillus salivarius (strain UCC118) (Lactobacillus salivarius).